We begin with the raw amino-acid sequence, 121 residues long: Small ribosomal subunit protein uS13 (121 aa).

The disordered stretch occupies residues 91 to 121 (HRRGLPVRGQNSKNNARTRKGPRRTVANKKK). A compositionally biased stretch (basic residues) spans 106-121 (ARTRKGPRRTVANKKK).

The protein belongs to the universal ribosomal protein uS13 family. In terms of assembly, part of the 30S ribosomal subunit. Forms a loose heterodimer with protein S19. Forms two bridges to the 50S subunit in the 70S ribosome.

Functionally, located at the top of the head of the 30S subunit, it contacts several helices of the 16S rRNA. In the 70S ribosome it contacts the 23S rRNA (bridge B1a) and protein L5 of the 50S subunit (bridge B1b), connecting the 2 subunits; these bridges are implicated in subunit movement. Contacts the tRNAs in the A and P-sites. The polypeptide is Small ribosomal subunit protein uS13 (Bacillus cereus (strain ZK / E33L)).